A 162-amino-acid polypeptide reads, in one-letter code: Phosphopantetheine adenylyltransferase (162 aa).

Serine 11 is a substrate binding site. ATP contacts are provided by residues 11-12 and histidine 19; that span reads SF. Substrate-binding residues include lysine 43, leucine 75, and arginine 89. Residues 90–92, glutamate 100, and 125–131 contribute to the ATP site; these read GLR and FSYISSS.

It belongs to the bacterial CoaD family. Homohexamer. The cofactor is Mg(2+).

It is found in the cytoplasm. It carries out the reaction (R)-4'-phosphopantetheine + ATP + H(+) = 3'-dephospho-CoA + diphosphate. It participates in cofactor biosynthesis; coenzyme A biosynthesis; CoA from (R)-pantothenate: step 4/5. Its function is as follows. Reversibly transfers an adenylyl group from ATP to 4'-phosphopantetheine, yielding dephospho-CoA (dPCoA) and pyrophosphate. The chain is Phosphopantetheine adenylyltransferase from Petrotoga mobilis (strain DSM 10674 / SJ95).